The sequence spans 155 residues: MSRRGTAEKKKAKSDPIYRNRLVNMLVNRILKHGKKSLAYQIMYRAVKTIQQNTEKNPLSVLRQAIRGVTPDLTVKARRVSGSTHQVPIEIRSTQGKALAVRWLLAASRKRPGRDMAFKLSSELVDAAKGRGDAIRKKEETHRMAEANRAFAHFR.

It belongs to the universal ribosomal protein uS7 family. Part of the 30S ribosomal subunit.

The protein resides in the plastid. Functionally, one of the primary rRNA binding proteins, it binds directly to 16S rRNA where it nucleates assembly of the head domain of the 30S subunit. This chain is Small ribosomal subunit protein uS7cz/uS7cy (rps7-A), found in Cuscuta obtusiflora (Peruvian dodder).